The sequence spans 78 residues: Large ribosomal subunit protein bL28 (78 aa).

It belongs to the bacterial ribosomal protein bL28 family.

In Haemophilus influenzae (strain 86-028NP), this protein is Large ribosomal subunit protein bL28.